The sequence spans 181 residues: Mitochondrial pyruvate carrier-like protein (181 aa).

Transmembrane regions (helical) follow at residues 23–42 (YLAS…PLAA) and 52–74 (IISG…FAYR). The interval 125–154 (TGSVDSSATSTGSVDSSATSTGSVDSSAAT) is disordered.

The protein belongs to the mitochondrial pyruvate carrier (MPC) (TC 2.A.105) family.

It is found in the mitochondrion inner membrane. Functionally, may mediate the uptake of pyruvate into mitochondria. The sequence is that of Mitochondrial pyruvate carrier-like protein from Bos taurus (Bovine).